The sequence spans 906 residues: Probable dipeptidyl-aminopeptidase B (906 aa).

Positions 1-11 (MRSSEDREDSE) are enriched in acidic residues. The disordered stretch occupies residues 1 to 33 (MRSSEDREDSELLPANRPRSPSRSSYDSDDSGL). Topologically, residues 1–85 (MRSSEDREDS…TKASSSRSRR (85 aa)) are cytoplasmic. Over residues 21-33 (PSRSSYDSDDSGL) the composition is skewed to low complexity. Residues 86 to 106 (LLWLVVLLCCGGWVVAFVLFI) form a helical; Signal-anchor for type II membrane protein membrane-spanning segment. Over 107–906 (TQGRADYRTA…AKRVWPGFAH (800 aa)) the chain is Vacuolar. 2 N-linked (GlcNAc...) asparagine glycosylation sites follow: Asn338 and Asn629. Catalysis depends on Ser743, which acts as the Charge relay system. N-linked (GlcNAc...) asparagine glycosylation is present at Asn797. Active-site charge relay system residues include Asp820 and His853.

Belongs to the peptidase S9B family.

It localises to the vacuole membrane. The enzyme catalyses Release of an N-terminal dipeptide, Xaa-Yaa-|-Zaa-, from a polypeptide, preferentially when Yaa is Pro, provided Zaa is neither Pro nor hydroxyproline.. Type IV dipeptidyl-peptidase which removes N-terminal dipeptides sequentially from polypeptides having unsubstituted N-termini provided that the penultimate residue is proline. The sequence is that of Probable dipeptidyl-aminopeptidase B (dapB) from Emericella nidulans (strain FGSC A4 / ATCC 38163 / CBS 112.46 / NRRL 194 / M139) (Aspergillus nidulans).